A 39-amino-acid chain; its full sequence is Natriuretic peptide TNPc (39 aa).

Cysteines 9 and 25 form a disulfide.

The protein belongs to the natriuretic peptide family. Expressed by the venom gland.

It localises to the secreted. In terms of biological role, snake venom natriuretic peptide that exhibits vasoactive and hypotensive activity. Produces a near complete relaxation in pre-contracted aortae by activating the natriuretic peptide receptor 1 (NPR1). Stimulates cGMP production through the natriuretic peptide receptor 1 (NPR1) with high potencies for the rat NPR1 (EC(50)=100 nM), and very weak potencies over human NPR1 (28% activation at 10 uM). In vivo, reduces both systolic and diastolic blood pressure with no effect on heart rate, when intravenously injected in conscious rabbits. Also enhances the bradycardia due to cardiac afferent stimulation (Bezold-Jarisch reflex). This chain is Natriuretic peptide TNPc, found in Oxyuranus microlepidotus (Inland taipan).